The chain runs to 314 residues: Electron transfer flavoprotein subunit alpha (314 aa).

253–281 (LYVAVGISGAIQHLAGMKDSKVIVAINKD) provides a ligand contact to FAD.

The protein belongs to the ETF alpha-subunit/FixB family. As to quaternary structure, heterodimer of an alpha and a beta subunit. Requires FAD as cofactor.

Functionally, the electron transfer flavoprotein serves as a specific electron acceptor for other dehydrogenases. It transfers the electrons to the main respiratory chain via ETF-ubiquinone oxidoreductase (ETF dehydrogenase). The sequence is that of Electron transfer flavoprotein subunit alpha (etfA) from Bradyrhizobium diazoefficiens (strain JCM 10833 / BCRC 13528 / IAM 13628 / NBRC 14792 / USDA 110).